Consider the following 319-residue polypeptide: Ribonuclease Z (319 aa).

Zn(2+) is bound by residues His62, His64, Asp66, His67, His145, Asp215, and His273. Asp66 (proton acceptor) is an active-site residue.

This sequence belongs to the RNase Z family. As to quaternary structure, homodimer. It depends on Zn(2+) as a cofactor.

The enzyme catalyses Endonucleolytic cleavage of RNA, removing extra 3' nucleotides from tRNA precursor, generating 3' termini of tRNAs. A 3'-hydroxy group is left at the tRNA terminus and a 5'-phosphoryl group is left at the trailer molecule.. Its function is as follows. Zinc phosphodiesterase, which displays some tRNA 3'-processing endonuclease activity. Probably involved in tRNA maturation, by removing a 3'-trailer from precursor tRNA. The protein is Ribonuclease Z of Borrelia duttonii (strain Ly).